Here is a 100-residue protein sequence, read N- to C-terminus: MELTPREKDKLLIFTAALLAERRKARGLKLNHPEAVALISAAIMEGARDGKTVAELMSAGRTLLSRADVMEGIAEMIPDIQVEATFPDGSKLVTVHQPIV.

It belongs to the urease gamma subunit family. Heterotrimer of UreA (gamma), UreB (beta) and UreC (alpha) subunits. Three heterotrimers associate to form the active enzyme.

The protein localises to the cytoplasm. The enzyme catalyses urea + 2 H2O + H(+) = hydrogencarbonate + 2 NH4(+). Its pathway is nitrogen metabolism; urea degradation; CO(2) and NH(3) from urea (urease route): step 1/1. The protein is Urease subunit gamma of Verminephrobacter eiseniae (strain EF01-2).